Consider the following 158-residue polypeptide: 2-C-methyl-D-erythritol 2,4-cyclodiphosphate synthase (158 aa).

2 residues coordinate a divalent metal cation: aspartate 9 and histidine 11. Residues 9-11 (DVH) and 35-36 (HS) contribute to the 4-CDP-2-C-methyl-D-erythritol 2-phosphate site. A divalent metal cation is bound at residue histidine 43. Residues 57 to 59 (DIG), 62 to 66 (FPDTD), 133 to 136 (TTTE), phenylalanine 140, and arginine 143 each bind 4-CDP-2-C-methyl-D-erythritol 2-phosphate.

It belongs to the IspF family. As to quaternary structure, homotrimer. A divalent metal cation is required as a cofactor.

It carries out the reaction 4-CDP-2-C-methyl-D-erythritol 2-phosphate = 2-C-methyl-D-erythritol 2,4-cyclic diphosphate + CMP. The protein operates within isoprenoid biosynthesis; isopentenyl diphosphate biosynthesis via DXP pathway; isopentenyl diphosphate from 1-deoxy-D-xylulose 5-phosphate: step 4/6. Involved in the biosynthesis of isopentenyl diphosphate (IPP) and dimethylallyl diphosphate (DMAPP), two major building blocks of isoprenoid compounds. Catalyzes the conversion of 4-diphosphocytidyl-2-C-methyl-D-erythritol 2-phosphate (CDP-ME2P) to 2-C-methyl-D-erythritol 2,4-cyclodiphosphate (ME-CPP) with a corresponding release of cytidine 5-monophosphate (CMP). The protein is 2-C-methyl-D-erythritol 2,4-cyclodiphosphate synthase of Actinobacillus pleuropneumoniae serotype 7 (strain AP76).